The primary structure comprises 608 residues: Rap1 GTPase-GDP dissociation stimulator 1 (608 aa).

2 ARM repeats span residues 89 to 131 and 171 to 212; these read GLIS…DQAG and DSLQ…NLAE. Residues 122-171 form a prevents binding to prenylated RHOA region; sequence EGRSAVDQAGGAQIVVDHLRSLCSKTDPASEKLLTVFCGMLMNYSNEKND. Lysine 231 carries the N6-acetyllysine modification. ARM repeat units lie at residues 348 to 391, 392 to 432, and 480 to 520; these read DGNC…NLAI, PVVN…MLID, and SKDV…LIAA.

Interacts with RABL3. Interacts with RHOT1. As to quaternary structure, interacts with unprenylated RHOA; the interaction is direct. Interacts with RAP1A. Interacts with KRAS. Interacts with RAC1. Interacts with RAP1B. Preferentially interacts with unprenylated GTPases that will become geranylgeranylated. May also interact with prenylated GTPases. In terms of assembly, interacts with prenylated RHOA; the interaction is direct and in a 1:1 stoichiometry. Interacts with RAP1A. Interacts with KRAS. Interacts with RAC1. Interacts with RAP1B. Preferentially interacts with prenylated GTPases. Post-translationally, the N-terminus is blocked. Forms covalent cross-links mediated by transglutaminase TGM2, between a glutamine and the epsilon-amino group of a lysine residue, forming homopolymers and heteropolymers. In terms of tissue distribution, brain.

Its subcellular location is the cytoplasm. The protein localises to the cytosol. It is found in the endoplasmic reticulum. It localises to the mitochondrion. The protein resides in the nucleus. In terms of biological role, acts as a GEF (guanine nucleotide exchange factor) for the Rho family of small GTP-binding proteins (G proteins) that stimulates the dissociation of GDP to enable subsequent binding of GTP. Additionally, appears to chaperone the processing and/or trafficking of small GTPases containing a C-terminal polybasic region independently of GEF activity. Targets include RAP1A/RAP1B, RHOA, RHOB, RHOC, RAC1 and KRAS. Regulates mitochondrial dynamics by controlling RHOT function to promote mitochondrial fission during high calcium conditions. Able to promote the Ca(2+) release from the endoplasmic reticulum via both inositol trisphosphate (Ins3P) and ryanodine sensitive receptors leading to a enhanced mitochondrial Ca(2+) uptake. Functionally, acts as a GEF (guanine nucleotide exchange factor) for unprenylated RHOA. Chaperones the entry and passage of small GTPases through the prenylation pathway. Recognizes the last amino acid in the GTPase C-terminal CAAX motif with a preference for 'Leu' over 'Met', indicating involvement in the geranylgeranylation pathway. May also recognize prenylated GTPases. Acts as a GEF (guanine nucleotide exchange factor) for prenylated RHOA. Acts as a GEF for RHOC. Chaperones the downstream trafficking and/or processing of small newly prenylated GTPases. Escorts RAC1 to the nucleus. The sequence is that of Rap1 GTPase-GDP dissociation stimulator 1 (RAP1GDS1) from Bos taurus (Bovine).